Consider the following 388-residue polypeptide: AT-rich binding protein (388 aa).

The C2H2-type 1 zinc-finger motif lies at 29–52 (IVCHTCQEELQTQDQFWKHIQDEH). 2 stretches are compositionally biased toward low complexity: residues 138–165 (QQHQ…LQQQ) and 249–265 (VSVS…STTP). Disordered regions lie at residues 138–168 (QQHQ…QRDV) and 240–265 (PPPP…STTP). C2H2-type zinc fingers lie at residues 321–345 (YVCD…RVVH) and 351–374 (FNCE…KKKH).

The protein localises to the nucleus. May be a transcription factor for genes having (A+T) stretches in their promoter and/or enhancer regions. Binds to AT rich DNA. The protein is AT-rich binding protein of Drosophila melanogaster (Fruit fly).